The chain runs to 860 residues: Nuclear cap-binding protein complex subunit 1 (860 aa).

The MIF4G domain occupies 36 to 271 (CKDMLPDIRT…SNVKNALAND (236 aa)).

This sequence belongs to the NCBP1 family. As to quaternary structure, component of the nuclear cap-binding complex (CBC).

The protein localises to the nucleus. Component of the cap-binding complex (CBC) involved in the nuclear export of capped U snRNAs. The CBC complex is required for efficient pre-mRNA splicing through efficient commitment complex and spliceosome formation; and involved in rRNA processing at sites A0, A1 and A2. The sequence is that of Nuclear cap-binding protein complex subunit 1 (CBC1) from Eremothecium gossypii (strain ATCC 10895 / CBS 109.51 / FGSC 9923 / NRRL Y-1056) (Yeast).